Here is a 581-residue protein sequence, read N- to C-terminus: 2-isopropylmalate synthase (581 aa).

Residues 32–306 (PQWCAVDLRD…DPQLDFSDIK (275 aa)) enclose the Pyruvate carboxyltransferase domain. The Mg(2+) site is built by aspartate 41, histidine 245, histidine 247, and asparagine 281. Residues 455 to 581 (RSAPVEQIAL…KHQQLQNGGV (127 aa)) are regulatory domain.

Belongs to the alpha-IPM synthase/homocitrate synthase family. LeuA type 2 subfamily. In terms of assembly, homodimer. Mg(2+) is required as a cofactor.

The protein localises to the cytoplasm. It carries out the reaction 3-methyl-2-oxobutanoate + acetyl-CoA + H2O = (2S)-2-isopropylmalate + CoA + H(+). It participates in amino-acid biosynthesis; L-leucine biosynthesis; L-leucine from 3-methyl-2-oxobutanoate: step 1/4. Functionally, catalyzes the condensation of the acetyl group of acetyl-CoA with 3-methyl-2-oxobutanoate (2-ketoisovalerate) to form 3-carboxy-3-hydroxy-4-methylpentanoate (2-isopropylmalate). This Corynebacterium efficiens (strain DSM 44549 / YS-314 / AJ 12310 / JCM 11189 / NBRC 100395) protein is 2-isopropylmalate synthase.